The primary structure comprises 654 residues: Mitochondrial-processing peptidase subunit alpha-1 (654 aa).

The disordered stretch occupies residues 73 to 94; the sequence is SSSSYKGNNNNNNKLSYTTSSN. A coiled-coil region spans residues 381 to 446; it reads HKNHLKSQLQ…EQLELQQVKE (66 aa).

It belongs to the peptidase M16 family. Heterodimer of alpha and beta subunits, forming the mitochondrial processing protease (MPP) in which subunit alpha is involved in substrate recognition and binding and subunit beta is the catalytic subunit.

Its subcellular location is the mitochondrion matrix. Its function is as follows. Substrate recognition and binding subunit of the essential mitochondrial processing protease (MPP), which cleaves the mitochondrial sequence off newly imported precursors proteins. The polypeptide is Mitochondrial-processing peptidase subunit alpha-1 (mppA1) (Dictyostelium discoideum (Social amoeba)).